Consider the following 284-residue polypeptide: Polyamine aminopropyltransferase (284 aa).

The PABS domain occupies 2–237; that stretch reads ELWYTEEQTQ…GYWLFGFASK (236 aa). Glutamine 31 is a binding site for S-methyl-5'-thioadenosine. Histidine 62 and aspartate 86 together coordinate spermidine. S-methyl-5'-thioadenosine-binding positions include glutamate 106 and 137 to 138; that span reads DG. Aspartate 155 functions as the Proton acceptor in the catalytic mechanism. 155 to 158 contacts spermidine; the sequence is DSTD. An S-methyl-5'-thioadenosine-binding site is contributed by proline 162.

Belongs to the spermidine/spermine synthase family. As to quaternary structure, homodimer or homotetramer.

The protein resides in the cytoplasm. It catalyses the reaction S-adenosyl 3-(methylsulfanyl)propylamine + putrescine = S-methyl-5'-thioadenosine + spermidine + H(+). Its pathway is amine and polyamine biosynthesis; spermidine biosynthesis; spermidine from putrescine: step 1/1. Functionally, catalyzes the irreversible transfer of a propylamine group from the amino donor S-adenosylmethioninamine (decarboxy-AdoMet) to putrescine (1,4-diaminobutane) to yield spermidine. This is Polyamine aminopropyltransferase from Alkaliphilus metalliredigens (strain QYMF).